The sequence spans 382 residues: Glycerate dehydrogenase (382 aa).

NAD(+) is bound by residues 175-176 (RI), 271-273 (CSR), and Asp-297. The active site involves Arg-273. Glu-302 is an active-site residue. His-320 serves as the catalytic Proton donor. 320–323 (HIAS) is a binding site for NAD(+).

It belongs to the D-isomer specific 2-hydroxyacid dehydrogenase family.

It localises to the peroxisome. It carries out the reaction (R)-glycerate + NAD(+) = 3-hydroxypyruvate + NADH + H(+). The protein operates within photosynthesis; photorespiration; 3-phospho-D-glycerate from glycine: step 3/4. In Cucumis sativus (Cucumber), this protein is Glycerate dehydrogenase (HPR-A).